A 262-amino-acid chain; its full sequence is Pyridoxine 5'-phosphate synthase (262 aa).

Asn6 provides a ligand contact to 3-amino-2-oxopropyl phosphate. 8–9 contributes to the 1-deoxy-D-xylulose 5-phosphate binding site; it reads DH. Arg17 is a 3-amino-2-oxopropyl phosphate binding site. The active-site Proton acceptor is His43. 1-deoxy-D-xylulose 5-phosphate contacts are provided by Arg45 and His50. Glu70 (proton acceptor) is an active-site residue. Thr102 contributes to the 1-deoxy-D-xylulose 5-phosphate binding site. The Proton donor role is filled by His215. 3-amino-2-oxopropyl phosphate is bound by residues Gly216 and 237-238; that span reads GH.

This sequence belongs to the PNP synthase family. As to quaternary structure, homooctamer; tetramer of dimers.

It localises to the cytoplasm. The enzyme catalyses 3-amino-2-oxopropyl phosphate + 1-deoxy-D-xylulose 5-phosphate = pyridoxine 5'-phosphate + phosphate + 2 H2O + H(+). Its pathway is cofactor biosynthesis; pyridoxine 5'-phosphate biosynthesis; pyridoxine 5'-phosphate from D-erythrose 4-phosphate: step 5/5. Catalyzes the complicated ring closure reaction between the two acyclic compounds 1-deoxy-D-xylulose-5-phosphate (DXP) and 3-amino-2-oxopropyl phosphate (1-amino-acetone-3-phosphate or AAP) to form pyridoxine 5'-phosphate (PNP) and inorganic phosphate. This chain is Pyridoxine 5'-phosphate synthase, found in Helicobacter pylori (strain J99 / ATCC 700824) (Campylobacter pylori J99).